We begin with the raw amino-acid sequence, 209 residues long: Thymidylate kinase (209 aa).

Residue 11 to 18 (GPDGAGKT) coordinates ATP.

It belongs to the thymidylate kinase family.

The enzyme catalyses dTMP + ATP = dTDP + ADP. Its function is as follows. Phosphorylation of dTMP to form dTDP in both de novo and salvage pathways of dTTP synthesis. The chain is Thymidylate kinase from Streptococcus thermophilus (strain ATCC BAA-250 / LMG 18311).